The following is a 714-amino-acid chain: RanBP-type and C3HC4-type zinc finger-containing protein 1 (714 aa).

Disordered regions lie at residues 1–23 and 152–172; these read MSLSSGGWTRASPPAQSSSSHLG and SSSTEEGRLPPPPLATQSKAP. Positions 14-23 are enriched in polar residues; sequence PAQSSSSHLG. One can recognise a Ubiquitin-like domain in the interval 225–301; the sequence is LAVVVEDASS…TAFLYLISAR (77 aa). The RanBP2-type zinc-finger motif lies at 394–426; the sequence is RTSIQPGWACPTCTYINKPTRPGCEMCSADRPE. The TRIAD supradomain stretch occupies residues 482 to 710; that stretch reads ERVECRICYV…VNKQRCHPKC (229 aa). 18 residues coordinate Zn(2+): C486, C489, C504, H506, C509, C512, C527, C536, C575, C580, C595, C598, C603, C606, H610, C615, C651, and C654. The RING-type 1 zinc finger occupies 486 to 536; sequence CRICYVELESGEGVLLRECLHCFCKECLRSVILMSEDPQVACPYRDESYAC. An IBR-type zinc finger spans residues 555 to 615; sequence QHWLQRGLSV…CKAIHEGMNC (61 aa). An RING-type 2; atypical zinc finger spans residues 651–680; sequence CPQCGIIVQKKEGCDWLRCTVCHTEICWVT. C664 is an active-site residue. 2 residues coordinate Zn(2+): C669 and C672.

Belongs to the RBR family. In terms of assembly, component of the LUBAC complex (linear ubiquitin chain assembly complex).

It catalyses the reaction [E2 ubiquitin-conjugating enzyme]-S-ubiquitinyl-L-cysteine + [acceptor protein]-L-lysine = [E2 ubiquitin-conjugating enzyme]-L-cysteine + [acceptor protein]-N(6)-ubiquitinyl-L-lysine.. The protein operates within protein modification; protein ubiquitination. Functionally, component of the LUBAC complex which conjugates linear ('Met-1'-linked) polyubiquitin chains to substrates and plays a key role in NF-kappa-B activation and regulation of inflammation. LUBAC conjugates linear polyubiquitin to ikbkg and RIPK1 and is involved in activation of the canonical NF-kappa-B and the JNK signaling pathways. Linear ubiquitination mediated by the LUBAC complex interferes with TNF-induced cell death and thereby prevents inflammation. LUBAC is recruited to the TNF-R1 signaling complex (TNF-RSC) to conjugate linear polyubiquitin to ikbkg and possibly other components contributing to the stability of the complex. The LUBAC complex is also involved in innate immunity by conjugating linear polyubiquitin chains at the surface of bacteria invading the cytosol to form the ubiquitin coat surrounding bacteria. LUBAC is not able to initiate formation of the bacterial ubiquitin coat, and can only promote formation of linear polyubiquitins on pre-existing ubiquitin. The bacterial ubiquitin coat acts as an 'eat-me' signal for xenophagy and promotes NF-kappa-B activation. Binds polyubiquitin of different linkage types. In Danio rerio (Zebrafish), this protein is RanBP-type and C3HC4-type zinc finger-containing protein 1 (rbck1).